Consider the following 315-residue polypeptide: Probable cell division protein WhiA (315 aa).

Positions 280–313 (SLKELGDLLDPPLSKSGVAYRMRKLEESVKEILQ) form a DNA-binding region, H-T-H motif.

The protein belongs to the WhiA family.

Its function is as follows. Involved in cell division and chromosome segregation. The chain is Probable cell division protein WhiA from Syntrophomonas wolfei subsp. wolfei (strain DSM 2245B / Goettingen).